Reading from the N-terminus, the 389-residue chain is Ribosomal RNA large subunit methyltransferase M (389 aa).

Residues 1–13 (MIGNARMSQKYPT) show a composition bias toward polar residues. The disordered stretch occupies residues 1 to 24 (MIGNARMSQKYPTSSSRKRSPLSS). Residues S214, 247–250 (APGG), D266, D286, and D302 contribute to the S-adenosyl-L-methionine site. The active-site Proton acceptor is K331.

Belongs to the class I-like SAM-binding methyltransferase superfamily. RNA methyltransferase RlmE family. RlmM subfamily. In terms of assembly, monomer.

The protein localises to the cytoplasm. It catalyses the reaction cytidine(2498) in 23S rRNA + S-adenosyl-L-methionine = 2'-O-methylcytidine(2498) in 23S rRNA + S-adenosyl-L-homocysteine + H(+). Catalyzes the 2'-O-methylation at nucleotide C2498 in 23S rRNA. In Hahella chejuensis (strain KCTC 2396), this protein is Ribosomal RNA large subunit methyltransferase M.